Consider the following 459-residue polypeptide: MRCGGGARACRRACRCWLSGYAGPADGTQQPDAPEHAVAREALVDLCRRRHFFSGTPQQLSTAALLSGCHARFGPLGVELRKNLASQWWSSMVVFREQVFAVDSLHQEPGSSQPRDSAFRLVSPESIREILQDREPSKEQLVAFLENLLKTSGKLRATLLHGALEHYVNCLDLVNRKLPFGLAQIGVCFHPVSNSNQTPSSVTRVGEKTEASLVWFTPTRTSSQWLDFWLRHRLLWWRKFAMSPSNFSSADCQDELGRKGSKLYYSFPWGKEPIETLWNLGDQELLHTYPGNVSTIQGRDGRKNVVPCVLSVSGDVDLGTLAYLYDSFQLAENSFARKKSLQRKVLKLHPCLAPIKVALDVGKGPTVELRQVCQGLLNELLENGISVWPGYSETVHSSLEQLHSKYDEMSVLFSVLVTETTLENGLIQLRSRDTTMKEMMHISKLRDFLVKYLASASNV.

Heterotrimer composed of a catalytic subunit and a homodimer of accessory subunits (POLG:POLG2).

The protein localises to the mitochondrion. It is found in the mitochondrion matrix. Its subcellular location is the mitochondrion nucleoid. In terms of biological role, accessory subunit of DNA polymerase gamma solely responsible for replication of mitochondrial DNA (mtDNA). Acts as an allosteric regulator of the holoenzyme activities. Enhances the polymerase activity and the processivity of POLG by increasing its interactions with the DNA template. Suppresses POLG exonucleolytic proofreading especially toward homopolymeric templates bearing mismatched termini. Binds to single-stranded DNA. This is DNA polymerase subunit gamma-2 (Polg2) from Mus musculus (Mouse).